We begin with the raw amino-acid sequence, 239 residues long: Cysteine-rich venom protein 2 (239 aa).

The signal sequence occupies residues 1–19; sequence MIALIVLPILAAVLQQSSG. Positions 38-166 constitute an SCP domain; the sequence is VDLHNSLRRS…EYSYFYVCQY (129 aa). Cystine bridges form between cysteine 75–cysteine 153, cysteine 92–cysteine 167, cysteine 148–cysteine 164, cysteine 186–cysteine 193, cysteine 189–cysteine 198, cysteine 202–cysteine 234, and cysteine 219–cysteine 232. The region spanning 198-234 is the ShKT domain; it reads CTNPCPKKISTQLPRFGPQAGCQDKQMQSDCSATCFC.

This sequence belongs to the CRISP family. In terms of tissue distribution, expressed by the venom gland.

Its subcellular location is the secreted. Its function is as follows. Weakly blocks contraction of smooth muscle elicited by high potassium-induced depolarization, but does not block caffeine-stimulated contraction. May target voltage-gated calcium channels on smooth muscle. The polypeptide is Cysteine-rich venom protein 2 (Sistrurus catenatus edwardsii (Desert massasauga)).